Reading from the N-terminus, the 479-residue chain is MASLQSGGDAAANGVDADVDGAASPPSAKRPRAGAGAAAITDAEVRAEFAHHDRAVARLNNGTFGCCPASVLAARARWQRLFLSQPDAFYFHHLQPGLARSRAAVAAAVGAGDASEVSLVDNVTTAAAIIMQHVAWSFAEGDFARGDVVLMFLYTYCSIKNSIHAYVARAGATVVEVPLPFPVSSPDAIVAEFRAALAVARDGGRRRVRLAVIDHITAMPTVLIPVKELVAICREEGVDKVFVDAAHAVGQVPVDVRDIGADFYASNLHKWFFCPSAVAFIHTRKDDPVSSKLHHPVVSSEYGNGLPMESAWIGVRDYSAQLVVPDVVDFVNRFDGGVEGIRRRNHDKVVEMGTMLAAAWGTFLGTPPEMCGSMLMVGLPGSLGVGSEDDAVGLRTMLRKQFKVEVPLYYNSKAAAADAPPEMVKDGNGDPVTGYVRISHQVYNVREEYEALRDAVAKLVADGFTCRKLRPPEKEETLA.

Positions 1–36 (MASLQSGGDAAANGVDADVDGAASPPSAKRPRAGAG) are disordered. A compositionally biased stretch (low complexity) spans 7–36 (GGDAAANGVDADVDGAASPPSAKRPRAGAG). K270 bears the N6-(pyridoxal phosphate)lysine mark.

This sequence belongs to the class-V pyridoxal-phosphate-dependent aminotransferase family. Requires pyridoxal 5'-phosphate as cofactor.

The enzyme catalyses L-cysteine + H2O = hydrogen sulfide + pyruvate + NH4(+) + H(+). Functionally, catalyzes the production of hydrogen sulfide (H2S) from cysteine. The sequence is that of Putative L-cysteine desulfhydrase 2 from Oryza sativa subsp. japonica (Rice).